Here is a 131-residue protein sequence, read N- to C-terminus: Pancreatic polypeptide prohormone (131 aa).

Positions 1–29 are cleaved as a signal peptide; sequence MAAAHRCLFLLLLSTCVALLLQPPLGALG. Tyrosine amide is present on Tyr65.

The protein belongs to the NPY family.

It localises to the secreted. Its function is as follows. Hormone secreted by pancreatic cells that acts as a regulator of pancreatic and gastrointestinal functions probably by signaling through the G protein-coupled receptor NPY4R2. The sequence is that of Pancreatic polypeptide prohormone (PPY) from Bos taurus (Bovine).